The primary structure comprises 151 residues: MKITSPHFGEIEVNEDKIITFPTGLIGFSDCKRYLLLEGEQGTPFWYLQSVEQEDLFFVMIDPTNFFEDYQIEPSSQDLAAIDLKESENAVILTLVTVPEQDIKSATVNLKGPVIINPDRRLGKQIVLHPSDYTTKHPLFNDQGTKARGAV.

This sequence belongs to the FliW family. As to quaternary structure, interacts with translational regulator CsrA and flagellin(s).

The protein resides in the cytoplasm. In terms of biological role, acts as an anti-CsrA protein, binds CsrA and prevents it from repressing translation of its target genes, one of which is flagellin. Binds to flagellin and participates in the assembly of the flagellum. This chain is Flagellar assembly factor FliW, found in Natranaerobius thermophilus (strain ATCC BAA-1301 / DSM 18059 / JW/NM-WN-LF).